A 260-amino-acid chain; its full sequence is Indole-3-glycerol phosphate synthase (260 aa).

The protein belongs to the TrpC family.

The enzyme catalyses 1-(2-carboxyphenylamino)-1-deoxy-D-ribulose 5-phosphate + H(+) = (1S,2R)-1-C-(indol-3-yl)glycerol 3-phosphate + CO2 + H2O. The protein operates within amino-acid biosynthesis; L-tryptophan biosynthesis; L-tryptophan from chorismate: step 4/5. In Bacteroides thetaiotaomicron (strain ATCC 29148 / DSM 2079 / JCM 5827 / CCUG 10774 / NCTC 10582 / VPI-5482 / E50), this protein is Indole-3-glycerol phosphate synthase.